The chain runs to 210 residues: ATP phosphoribosyltransferase (210 aa).

Belongs to the ATP phosphoribosyltransferase family. Short subfamily. In terms of assembly, heteromultimer composed of HisG and HisZ subunits.

It localises to the cytoplasm. It catalyses the reaction 1-(5-phospho-beta-D-ribosyl)-ATP + diphosphate = 5-phospho-alpha-D-ribose 1-diphosphate + ATP. It functions in the pathway amino-acid biosynthesis; L-histidine biosynthesis; L-histidine from 5-phospho-alpha-D-ribose 1-diphosphate: step 1/9. Its function is as follows. Catalyzes the condensation of ATP and 5-phosphoribose 1-diphosphate to form N'-(5'-phosphoribosyl)-ATP (PR-ATP). Has a crucial role in the pathway because the rate of histidine biosynthesis seems to be controlled primarily by regulation of HisG enzymatic activity. This chain is ATP phosphoribosyltransferase, found in Bacillus cytotoxicus (strain DSM 22905 / CIP 110041 / 391-98 / NVH 391-98).